The sequence spans 319 residues: Beta-ketoacyl-[acyl-carrier-protein] synthase III (319 aa).

Active-site residues include Cys110 and His246. Residues 247 to 251 are ACP-binding; the sequence is QANYR. Residue Asn276 is part of the active site.

Belongs to the thiolase-like superfamily. FabH family. In terms of assembly, homodimer.

The protein localises to the cytoplasm. It catalyses the reaction malonyl-[ACP] + acetyl-CoA + H(+) = 3-oxobutanoyl-[ACP] + CO2 + CoA. The protein operates within lipid metabolism; fatty acid biosynthesis. In terms of biological role, catalyzes the condensation reaction of fatty acid synthesis by the addition to an acyl acceptor of two carbons from malonyl-ACP. Catalyzes the first condensation reaction which initiates fatty acid synthesis and may therefore play a role in governing the total rate of fatty acid production. Possesses both acetoacetyl-ACP synthase and acetyl transacylase activities. Its substrate specificity determines the biosynthesis of branched-chain and/or straight-chain of fatty acids. This chain is Beta-ketoacyl-[acyl-carrier-protein] synthase III, found in Lactobacillus delbrueckii subsp. bulgaricus (strain ATCC BAA-365 / Lb-18).